Reading from the N-terminus, the 438-residue chain is Lipoyl synthase, mitochondrial (438 aa).

The N-terminal 31 residues, 1 to 31, are a transit peptide targeting the mitochondrion; it reads MAASARGLRTLQSAHSSTTVPRLQLAVSRCY. Positions 34 to 57 are enriched in low complexity; it reads TTSPDPPITNSSNSSNSSNSTPTP. A disordered region spans residues 34 to 58; it reads TTSPDPPITNSSNSSNSSNSTPTPK. [4Fe-4S] cluster contacts are provided by C148, C153, C159, C179, C183, C186, and S394. In terms of domain architecture, Radical SAM core spans 162–383; the sequence is GSSKSAATAT…KERALEMGFL (222 aa).

This sequence belongs to the radical SAM superfamily. Lipoyl synthase family. [4Fe-4S] cluster serves as cofactor.

The protein resides in the mitochondrion. The enzyme catalyses [[Fe-S] cluster scaffold protein carrying a second [4Fe-4S](2+) cluster] + N(6)-octanoyl-L-lysyl-[protein] + 2 oxidized [2Fe-2S]-[ferredoxin] + 2 S-adenosyl-L-methionine + 4 H(+) = [[Fe-S] cluster scaffold protein] + N(6)-[(R)-dihydrolipoyl]-L-lysyl-[protein] + 4 Fe(3+) + 2 hydrogen sulfide + 2 5'-deoxyadenosine + 2 L-methionine + 2 reduced [2Fe-2S]-[ferredoxin]. Its pathway is protein modification; protein lipoylation via endogenous pathway; protein N(6)-(lipoyl)lysine from octanoyl-[acyl-carrier-protein]: step 2/2. In terms of biological role, catalyzes the radical-mediated insertion of two sulfur atoms into the C-6 and C-8 positions of the octanoyl moiety bound to the lipoyl domains of lipoate-dependent enzymes, thereby converting the octanoylated domains into lipoylated derivatives. This chain is Lipoyl synthase, mitochondrial, found in Paracoccidioides brasiliensis (strain Pb18).